The sequence spans 467 residues: Argininosuccinate lyase (467 aa).

The protein belongs to the lyase 1 family. Argininosuccinate lyase subfamily.

Its subcellular location is the cytoplasm. The enzyme catalyses 2-(N(omega)-L-arginino)succinate = fumarate + L-arginine. It functions in the pathway amino-acid biosynthesis; L-arginine biosynthesis; L-arginine from L-ornithine and carbamoyl phosphate: step 3/3. In Allorhizobium ampelinum (strain ATCC BAA-846 / DSM 112012 / S4) (Agrobacterium vitis (strain S4)), this protein is Argininosuccinate lyase.